We begin with the raw amino-acid sequence, 257 residues long: Urease accessory protein UreD (257 aa).

Belongs to the UreD family. In terms of assembly, ureD, UreF and UreG form a complex that acts as a GTP-hydrolysis-dependent molecular chaperone, activating the urease apoprotein by helping to assemble the nickel containing metallocenter of UreC. The UreE protein probably delivers the nickel.

The protein localises to the cytoplasm. Required for maturation of urease via the functional incorporation of the urease nickel metallocenter. The polypeptide is Urease accessory protein UreD (Ruegeria pomeroyi (strain ATCC 700808 / DSM 15171 / DSS-3) (Silicibacter pomeroyi)).